The primary structure comprises 363 residues: MSALLEQKEQQERLREAAALGDIREVQKLVESGVDVNSQNEVNGWTCLHWACKRNHGQVVSYLLQSGADREILTTKGEMPVQLTSRREIRKIMGVEEADEEEEIPQLKKESELPFVPNYLANPAFPFIYTPAAEDSTQLQNGGPSPPPVSPPADSSPPLLPPTETPLLGAFPRDHSSLALVQNGDISAPSAILRTPESTKPGPVCQPPVSQNRSLFSVPSKPPVSLEPQNGTYAGPAPAFQPFFFTGAFPFNMQELVLKVRIQNPSLRENDFIEIELDRQELTYQELLRVSCCELGVNPDQVEKIRKLPNTLLRKDKDVARLQDFQELELVLMISDNNFLFRNAASTLTERPCYNRRASKLTY.

Position 1 is an N-acetylmethionine (Met-1). ANK repeat units follow at residues 9-38 (EQQE…DVNS) and 43-72 (NGWT…DREI). The tract at residues 135–167 (DSTQLQNGGPSPPPVSPPADSSPPLLPPTETPL) is disordered. The span at 144 to 164 (PSPPPVSPPADSSPPLLPPTE) shows a compositional bias: pro residues. Ser-176 is modified (phosphoserine).

The protein is Ankyrin repeat domain-containing protein 40 (Ankrd40) of Mus musculus (Mouse).